The chain runs to 152 residues: Outer membrane protein assembly factor BamE (152 aa).

Positions methionine 1–glycine 32 are cleaved as a signal peptide. Residue cysteine 33 is the site of N-palmitoyl cysteine attachment. The S-diacylglycerol cysteine moiety is linked to residue cysteine 33. The tract at residues isoleucine 114 to glutamate 152 is disordered.

Belongs to the BamE family. In terms of assembly, part of the Bam complex.

The protein resides in the cell outer membrane. Its function is as follows. Part of the outer membrane protein assembly complex, which is involved in assembly and insertion of beta-barrel proteins into the outer membrane. The protein is Outer membrane protein assembly factor BamE of Halomonas elongata (strain ATCC 33173 / DSM 2581 / NBRC 15536 / NCIMB 2198 / 1H9).